The sequence spans 147 residues: uncharacterized protein (147 aa).

Residues 1–16 are Extracellular-facing; that stretch reads MDHRAAFGYFSNACFK. Residues 17-37 form a helical membrane-spanning segment; that stretch reads VMLFSSLLASFASSVAFISLI. Residues 38-105 are Cytoplasmic-facing; the sequence is TFSLSSSESP…FEAAFFLLTN (68 aa). The helical transmembrane segment at 106-126 threads the bilayer; it reads EMIFFILYYFFSCLMFFYVAS. Residues 127 to 147 lie on the Extracellular side of the membrane; it reads ERNTNPKILQTINTKPLYIKN.

It is found in the membrane. This is an uncharacterized protein from Saccharomyces cerevisiae (strain ATCC 204508 / S288c) (Baker's yeast).